A 288-amino-acid polypeptide reads, in one-letter code: Probable aquaporin PIP1-2 (288 aa).

The tract at residues 1 to 37 (MEGKEEDVRLGANKFSERQPIGTAAQGSDDKDYKEPP) is disordered. The next 2 helical transmembrane spans lie at 57-77 (IAEF…VMGV) and 92-114 (IAWS…SGGH). An NPA 1 motif is present at residues 116 to 118 (NPA). The next 3 helical transmembrane spans lie at 135-155 (LFYM…VKGF), 177-197 (GDGL…VFSA), and 211-231 (ILAP…TIPI). An NPA 2 motif is present at residues 237-239 (NPA). Residues 259–279 (IFWVGPFIGAALAAIYHQVVI) traverse the membrane as a helical segment.

Belongs to the MIP/aquaporin (TC 1.A.8) family. PIP (TC 1.A.8.11) subfamily. As to expression, expressed in roots, leaves and anthers.

It localises to the cell membrane. Functionally, aquaporins facilitate the transport of water and small neutral solutes across cell membranes. The polypeptide is Probable aquaporin PIP1-2 (PIP1-2) (Oryza sativa subsp. japonica (Rice)).